A 362-amino-acid polypeptide reads, in one-letter code: Cobalt-precorrin-5B C(1)-methyltransferase (362 aa).

Belongs to the CbiD family.

It catalyses the reaction Co-precorrin-5B + S-adenosyl-L-methionine = Co-precorrin-6A + S-adenosyl-L-homocysteine. It participates in cofactor biosynthesis; adenosylcobalamin biosynthesis; cob(II)yrinate a,c-diamide from sirohydrochlorin (anaerobic route): step 6/10. Its function is as follows. Catalyzes the methylation of C-1 in cobalt-precorrin-5B to form cobalt-precorrin-6A. This is Cobalt-precorrin-5B C(1)-methyltransferase from Burkholderia cenocepacia (strain HI2424).